A 491-amino-acid chain; its full sequence is MSNLEESLRSLSLDFLNLLINGQAFSDVTFSVEGRLVHAHRCILAARSLFFRKFFCGTDSPQPVTGIDPTQHGSVPASPTRGSTAPAGIIPVNSVGYEVFLLLLQFLYSGQVSIVPQKHEPRPNCGERGCWHTHCSAAVDLALDTLAASRYFGVEQLALLTQKQLASMVEKASIEDVMKVLIASRKQDMHQLWTTCSHLVAKSGLPPEILAKHLPIDVVTKIEELRLKSSIARRSLMPHNHHHDLSVAQDLEDQKIRRMRRALDSSDVELVKLMVMGEGLNLDESLALHYAVESCSREVVKALLELGAADVNYPAGPAGKTPLHIAAEMVSPDMVAVLLDHHADPNVRTVGGITPLDILRTLTSDFLFKGAVPGLTHIEPNKLRLCLELVQSAAMVISREEGNNSNNQNNDNNTGIYPHMNEEHNSGSSGGSNNNLDSRLVYLNLGAGTGQMGPGRDQGDDHNSQREGMSRHHHHHQDPSTMYHHHHQHHF.

The region spanning Ser-26 to Pro-116 is the BTB domain. Residues Arg-122–Ser-136 form a C2HC NPR-type zinc finger. Zn(2+) contacts are provided by Cys-125, Cys-130, His-132, and Cys-135. 4 ANK repeats span residues Gln-254–Asp-283, Glu-284–Tyr-313, Ala-318–Val-347, and Gly-351–Leu-385. Positions Glu-400 to Phe-491 are disordered. Residues Asn-403 to Asn-413 are compositionally biased toward low complexity. Residues Asp-457–Ser-470 show a composition bias toward basic and acidic residues.

Belongs to the plant 'ANKYRIN-BTB/POZ' family. 'NOOT-BOP-COCH-like' (NBCL) subfamily. In terms of assembly, homodimer or heterodimer with BOP1. Interacts with PAN. In terms of tissue distribution, highly expressed in young floral meristem. Predominantly expressed in the boundary between floral meristem (FM) and sepal primordia.

It localises to the cytoplasm. Its subcellular location is the nucleus. The protein operates within protein modification; protein ubiquitination. In terms of biological role, may act as a substrate-specific adapter of an E3 ubiquitin-protein ligase complex (CUL3-RBX1-BTB) which mediates the ubiquitination and subsequent proteasomal degradation of target proteins. Acts redundantly with BOP2. BOP1/2 promote leaf and floral meristem fate and determinacy in a pathway targeting AP1 and AGL24. BOP1/2 act as transcriptional co-regulators through direct interaction with TGA factors, including PAN, a direct regulator of AP1. Controls lateral organ fate through positive regulation of adaxial-abaxial polarity genes ATHB-14/PHB, YAB1/FIL and YAB3, and through positive regulation of LOB domain-containing genes LOB, LBD6/AS2 and LBD36. Promotes and maintains a developmentally determinate state in leaf cells through the negative regulation of JAG, JGL and class I KNOX genes. Is also involved in nectary development, formation of normal abscission zones (AZs) and suppression of bract formation, probably by regulating the cell wall disorganization. The protein is Regulatory protein NPR5 of Arabidopsis thaliana (Mouse-ear cress).